We begin with the raw amino-acid sequence, 439 residues long: Ribulose bisphosphate carboxylase/oxygenase activase 2, chloroplastic (439 aa).

The N-terminal 58 residues, 1-58, are a transit peptide targeting the chloroplast; it reads MATSVSTIGAANKAPLSLNNSVAGTSVPSTAFFGKTLKKVYGKGVSSPKVTNRSLRIA. 169–176 provides a ligand contact to ATP; that stretch reads GGKGQGKS.

It belongs to the RuBisCO activase family.

The protein resides in the plastid. Its subcellular location is the chloroplast stroma. Activation of RuBisCO (ribulose-1,5-bisphosphate carboxylase/oxygenase; EC 4.1.1.39) involves the ATP-dependent carboxylation of the epsilon-amino group of lysine leading to a carbamate structure. The protein is Ribulose bisphosphate carboxylase/oxygenase activase 2, chloroplastic (RCA) of Nicotiana tabacum (Common tobacco).